Here is a 480-residue protein sequence, read N- to C-terminus: MDLLQILLAIAGLLAILLLQKQWRTKTSPGAKAGRKLPPEPAGAWPVIGHLHKLGGPNPIYRNLAEWSDKYGPVMTLKLGMQNAVVVSDREAIKECFTTNDKALADRPPSSIGLHLGFNYAAIGAAPYGPYWRDMRKLVLLEVLSSRRLEMLRNVRISEIGTSIKELYSNIIRSSGGSGPAKVVISHWIEQLTLNYILRTIAGRRFSDDSSKDAQYVKGVINDFMYFAGQFVVSDVIPIPLLRWLDPQGHLKGMKRVAKEVDTMCEAWIQEHVQRRMREKPGPGQEQDFIDVLLNNRDVMRKAQEEIDNHVGKERWVDETDLKHLVYLQAIVKEGLRLYPPGPLGAPHRAIEDCQVGGYFIPKGTQLLVNVWKLHRDPRVWSEPEKFMPERFLTRQAEVDVFGHHFELLPFGSGRRACPGITFAVQVMHLTVARLLQGFDMTTPSNLPVDMTEGPGVTMPKAHPVEVLMMPRLPSALYEP.

A helical transmembrane segment spans residues 3–23 (LLQILLAIAGLLAILLLQKQW). Cysteine 418 is a binding site for heme.

Belongs to the cytochrome P450 family. Heme is required as a cofactor. As to expression, mainly expressed in roots and, to a lesser extent, in leaves.

It localises to the membrane. The catalysed reaction is vinorine + reduced [NADPH--hemoprotein reductase] + O2 = vomilenine + oxidized [NADPH--hemoprotein reductase] + H2O + H(+). It catalyses the reaction vomilenine = perakine. It participates in alkaloid biosynthesis; ajmaline biosynthesis. A cytochrome P450 monooxygenase involved in the biosynthesis of ajmaline-type monoterpenoid indole alkaloids (MIAs) natural products, important plant-derived pharmaceuticals used in the therapy of heart disorders. Catalyzes the hydroxylation of vinorine to vomilenine, an intermediate chemical in the biosynthesis of ajmaline. Supports also vomilenine isomerization to perakine. The chain is Vinorine hydroxylase from Rauvolfia serpentina (Serpentine wood).